The following is a 2176-amino-acid chain: Methyl-CpG-binding domain-containing protein 9 (2176 aa).

The span at 1 to 13 shows a compositional bias: polar residues; that stretch reads MEPTDSTNEQLGD. 2 disordered regions span residues 1-20 and 28-85; these read MEPT…AAVK and GIDL…RDAS. Residues 83–133 form a PHD-type 1 zinc finger; sequence DASCGACGRPESIELVVVCDACERGFHMSCVNDGVEAAPSADWMCSDCRTG. An RING-type 1; degenerate zinc finger spans residues 86–131; that stretch reads CGACGRPESIELVVVCDACERGFHMSCVNDGVEAAPSADWMCSDCR. Positions 258–327 constitute an MBD domain; it reads RHFISERHGV…MDAEIRNENS (70 aa). The FYR N-terminal domain occupies 403–456; the sequence is GCPMQFEDFFVLSLGRIDIRQSYHNVNVIYPIGYKSCWHDKITGSLFTCEVSDG. The stretch at 491–511 forms a coiled coil; sequence EQNSDKLSNRRDSTQERDDDA. In terms of domain architecture, FYR C-terminal spans 550–698; that stretch reads SSRVDFDKNL…ESCTNYRTLK (149 aa). 3 short sequence motifs (nuclear localization signal) span residues 914-921, 1124-1131, and 1256-1263; these read SRRGRKKD, KKRTYISV, and YRKLECLS. A Pumilio repeat occupies 1098 to 1137; that stretch reads PTKKAVLSLLADIRGGDLVQRSIKGTKKRTYISVSDVIMK. In terms of domain architecture, Bromo spans 1130–1245; it reads SVSDVIMKKC…EKFKSLYEAE (116 aa). Residues 1251 to 1273 are a coiled coil; the sequence is QKLKDYRKLECLSAEMKKEIKDI. The PHD-type 2 zinc finger occupies 1287–1337; sequence EGVCKVCGVDKDDDSVLLCDTCDAEYHTYCLNPPLIRIPDGNWYCPSCVIA. The RING-type 2; degenerate zinc-finger motif lies at 1290–1335; it reads CKVCGVDKDDDSVLLCDTCDAEYHTYCLNPPLIRIPDGNWYCPSCV. Residues 1337-1344 carry the Nuclear localization signal motif; the sequence is AKRMAQEA. Residues 1410–1437 adopt a coiled-coil conformation; sequence QHLEQCAEAIIEMQQKLRSLSSEWKNAK. Disordered stretches follow at residues 1472 to 1553 and 1565 to 1595; these read GCDP…NLPE and GRNH…QELQ. 3 stretches are compositionally biased toward polar residues: residues 1492–1513, 1523–1532, and 1585–1595; these read SSTA…TQPG, KISSPETISS, and DASSQASQELQ. A coiled-coil region spans residues 1588–1628; it reads SQASQELQACQQDLSATSNEIQNLQQSIRSIESQLLKQSIR. The Nuclear localization signal motif lies at 1761–1768; that stretch reads EKRYGPCI. Residues 2136-2176 form a disordered region; that stretch reads IDETKPIISLPDQKSQPVSDSQERSSRVRRSGKKRKEPEGS.

As to quaternary structure, interacts with histone H4. Expressed in leaves, buds, flowers and stems.

It is found in the nucleus. It carries out the reaction L-lysyl-[protein] + acetyl-CoA = N(6)-acetyl-L-lysyl-[protein] + CoA + H(+). In terms of biological role, probable transcriptional regulator that acts as a histone acetyltransferase. Mediates the acetylation of histone H3 and H4 of target loci (e.g. FLC). Involved in an auxin-independent regulation of shoot branching and flowering time. This is Methyl-CpG-binding domain-containing protein 9 (MBD9) from Arabidopsis thaliana (Mouse-ear cress).